An 819-amino-acid polypeptide reads, in one-letter code: THO complex subunit 5B (819 aa).

The interval 285-332 is disordered; that stretch reads ARQQSRKDSGMSSNTESSRLEDDGPDDDDDGQRRRKRPKKLTSKEGSD.

The protein belongs to the THOC5 family. As to quaternary structure, component of the THO complex, which is composed of THO1, THO2, THO3, THO5, THO6 and THO7.

It is found in the nucleus. Acts as a component of the THO subcomplex of the TREX complex which is thought to couple mRNA transcription, processing and nuclear export. The protein is THO complex subunit 5B (THO5B) of Arabidopsis thaliana (Mouse-ear cress).